A 199-amino-acid polypeptide reads, in one-letter code: Holliday junction branch migration complex subunit RuvA (199 aa).

Positions 1-64 (MIGRLRGILL…DDAHLLYAFA (64 aa)) are domain I. The segment at 65–143 (SEKERGLFRS…DMPESGVAGM (79 aa)) is domain II. The flexible linker stretch occupies residues 144–150 (RPDRVDG). A domain III region spans residues 151–199 (SAPGTVAEAVSALVALGYKPNEASRAVRRLDTEALTTEEIIRQALQRML).

Belongs to the RuvA family. Homotetramer. Forms an RuvA(8)-RuvB(12)-Holliday junction (HJ) complex. HJ DNA is sandwiched between 2 RuvA tetramers; dsDNA enters through RuvA and exits via RuvB. An RuvB hexamer assembles on each DNA strand where it exits the tetramer. Each RuvB hexamer is contacted by two RuvA subunits (via domain III) on 2 adjacent RuvB subunits; this complex drives branch migration. In the full resolvosome a probable DNA-RuvA(4)-RuvB(12)-RuvC(2) complex forms which resolves the HJ.

The protein localises to the cytoplasm. In terms of biological role, the RuvA-RuvB-RuvC complex processes Holliday junction (HJ) DNA during genetic recombination and DNA repair, while the RuvA-RuvB complex plays an important role in the rescue of blocked DNA replication forks via replication fork reversal (RFR). RuvA specifically binds to HJ cruciform DNA, conferring on it an open structure. The RuvB hexamer acts as an ATP-dependent pump, pulling dsDNA into and through the RuvAB complex. HJ branch migration allows RuvC to scan DNA until it finds its consensus sequence, where it cleaves and resolves the cruciform DNA. This chain is Holliday junction branch migration complex subunit RuvA, found in Nitrosococcus oceani (strain ATCC 19707 / BCRC 17464 / JCM 30415 / NCIMB 11848 / C-107).